The sequence spans 709 residues: Golgin-84 (709 aa).

The Cytoplasmic segment spans residues 1 to 664 (MASWLKVAED…RATRFLWRHP (664 aa)). Disordered stretches follow at residues 24-132 (TELS…VVDR), 144-195 (EVEV…NQDA), and 211-265 (EVIH…DQLE). Low complexity predominate over residues 29-43 (EQSSPQPSGSSSQEG). Residues 78 to 89 (PPRERIKIEKIR) show a composition bias toward basic and acidic residues. Residues 94 to 113 (VDSSSVDASASKPDVSSSDV) show a composition bias toward low complexity. Residues 114–132 (KGLDDDGGAEKEEKVVVDR) are compositionally biased toward basic and acidic residues. The segment covering 162–180 (DGAADSGNSEGAAESSAPS) has biased composition (low complexity). 2 stretches are compositionally biased toward basic and acidic residues: residues 211–222 (EVIHEKNIKEVP) and 248–265 (QQEH…DQLE). Positions 287-592 (RVCAGLSSRL…AALEFQLEKS (306 aa)) form a coiled coil. The chain crosses the membrane as a helical; Signal-anchor for type II membrane protein span at residues 665–684 (VARVSLLFYLVFVHLFLMYL). The Lumenal portion of the chain corresponds to 685–707 (MHRLQDFASREGPTAMGGLANSD).

The protein resides in the golgi apparatus membrane. Its function is as follows. May be involved in maintaining Golgi structure and in intra-Golgi transport. The sequence is that of Golgin-84 from Oryza sativa subsp. japonica (Rice).